We begin with the raw amino-acid sequence, 928 residues long: DNA polymerase I (928 aa).

The 323-residue stretch at 1-323 (MVQIPQNPLI…ADEAPEVTAT (323 aa)) folds into the 5'-3' exonuclease domain. The 3'-5' exonuclease domain maps to 324-517 (VISYDNYVTI…LHLKMWPDLQ (194 aa)). Positions 324–928 (VISYDNYVTI…GSGENWDQAH (605 aa)) are klenow fragment. Residues 521–928 (GPLNVFENIE…GSGENWDQAH (408 aa)) form a polymerase region.

This sequence belongs to the DNA polymerase type-A family. In terms of assembly, single-chain monomer with multiple functions.

The catalysed reaction is DNA(n) + a 2'-deoxyribonucleoside 5'-triphosphate = DNA(n+1) + diphosphate. Functionally, in addition to polymerase activity, this DNA polymerase exhibits 3'-5' and 5'-3' exonuclease activity. It is able to utilize nicked circular duplex DNA as a template and can unwind the parental DNA strand from its template. Genetic interactions among priB, dam, lexA, nagC, polA, rdgB, rdgB, rep and uup link the PriA-PriB replication restart pathway to DNA double-strand break repair. This Escherichia coli (strain K12) protein is DNA polymerase I (polA).